Consider the following 380-residue polypeptide: Cytochrome b (380 aa).

A run of 4 helical transmembrane segments spans residues 33-53, 77-98, 113-133, and 178-198; these read FGSLLGLCLVTQIATGLFLAM, WLIRSIHANGASFFFICIYLHI, WTIGVVLLLLVMMTAFVGYVL, and FFAFHFLFPFIIAAATVIHLL. Heme b contacts are provided by His83 and His97. His182 and His196 together coordinate heme b. His201 provides a ligand contact to a ubiquinone. Transmembrane regions (helical) follow at residues 226 to 246, 288 to 308, 320 to 340, and 347 to 367; these read YKDLLGFAVLLTALASLALFS, LGGVLALLFSILVLMLVPFLH, VTQFLFWSLVADVMILTWIGG, and FVIIGQVASLIYFSLFLVLIP.

The protein belongs to the cytochrome b family. In terms of assembly, the cytochrome bc1 complex contains 3 respiratory subunits (MT-CYB, CYC1 and UQCRFS1), 2 core proteins (UQCRC1 and UQCRC2) and probably 6 low-molecular weight proteins. It depends on heme b as a cofactor.

It localises to the mitochondrion inner membrane. In terms of biological role, component of the ubiquinol-cytochrome c reductase complex (complex III or cytochrome b-c1 complex) that is part of the mitochondrial respiratory chain. The b-c1 complex mediates electron transfer from ubiquinol to cytochrome c. Contributes to the generation of a proton gradient across the mitochondrial membrane that is then used for ATP synthesis. This chain is Cytochrome b (mt-cyb), found in Kareius bicoloratus (Stone flounder).